Consider the following 341-residue polypeptide: L-threonine 3-dehydrogenase (341 aa).

Residue C38 participates in Zn(2+) binding. Residues T40 and H43 each act as charge relay system in the active site. Residues H63, E64, C93, C96, C99, and C107 each coordinate Zn(2+). NAD(+)-binding positions include I175, D195, R200, 262–264, and 286–287; these read LGI and IY.

Belongs to the zinc-containing alcohol dehydrogenase family. Homotetramer. It depends on Zn(2+) as a cofactor.

The protein localises to the cytoplasm. The enzyme catalyses L-threonine + NAD(+) = (2S)-2-amino-3-oxobutanoate + NADH + H(+). The protein operates within amino-acid degradation; L-threonine degradation via oxydo-reductase pathway; glycine from L-threonine: step 1/2. In terms of biological role, catalyzes the NAD(+)-dependent oxidation of L-threonine to 2-amino-3-ketobutyrate. The chain is L-threonine 3-dehydrogenase from Shewanella sp. (strain MR-7).